We begin with the raw amino-acid sequence, 238 residues long: Protein A47 (238 aa).

Belongs to the orthopoxvirus A47 protein family.

The protein is Protein A47 of Vaccinia virus (strain Ankara) (VACV).